The following is a 624-amino-acid chain: Hemocyanin E chain (624 aa).

Residues H169, H173, H200, H320, H324, and H360 each contribute to the Cu cation site. N445 is a glycosylation site (N-linked (GlcNAc...) asparagine). Cysteines 529 and 577 form a disulfide.

It belongs to the tyrosinase family. Hemocyanin subfamily. Tarantula hemocyanin is a 24-chain polymer with seven different chains identified. Hemolymph.

The protein resides in the secreted. The protein localises to the extracellular space. In terms of biological role, hemocyanins are copper-containing oxygen carriers occurring freely dissolved in the hemolymph of many mollusks and arthropods. In Aphonopelma sp. (American tarantula), this protein is Hemocyanin E chain (HCE).